We begin with the raw amino-acid sequence, 346 residues long: MSGTDHEAVSATEARRLFADWKAAPAIVLAVSGGPDSLALMWLAARWRKALKRGPALAVVTVDHGLRPEAAAEARAVKRLAASLDLPHRTLRWSGDKPSTGIQAAARGARYRLLAKAAKTLGASHVMTAHTRDDQAETVLMRLSRGSGIAGLAAMAREIERDGVVLARPLLDVPKARLIATLAKARIAFATDPSNADPRFTRPRLRELMPQLAAEGCDARSLVRLAVRAARADAALELMTDGAEQFLASLDAGSERPGVNARAFLGLAAEIQIRLLLRTLSRHGHEGPPELGKVEALAEALSQAAARRPQAAAKIRLKQTLAGAVISLTGDRLVIVPAPPRRGRVR.

Position 32–37 (32–37 (SGGPDS)) interacts with ATP.

The protein belongs to the tRNA(Ile)-lysidine synthase family.

The protein resides in the cytoplasm. It catalyses the reaction cytidine(34) in tRNA(Ile2) + L-lysine + ATP = lysidine(34) in tRNA(Ile2) + AMP + diphosphate + H(+). Functionally, ligates lysine onto the cytidine present at position 34 of the AUA codon-specific tRNA(Ile) that contains the anticodon CAU, in an ATP-dependent manner. Cytidine is converted to lysidine, thus changing the amino acid specificity of the tRNA from methionine to isoleucine. The chain is tRNA(Ile)-lysidine synthase from Rhodopseudomonas palustris (strain ATCC BAA-98 / CGA009).